A 101-amino-acid polypeptide reads, in one-letter code: Putative fatty acid-binding protein 5-like protein 3 (101 aa).

The protein belongs to the calycin superfamily. Fatty-acid binding protein (FABP) family.

Its function is as follows. High specificity for fatty acids. The polypeptide is Putative fatty acid-binding protein 5-like protein 3 (FABP5P3) (Homo sapiens (Human)).